We begin with the raw amino-acid sequence, 253 residues long: DNA repair protein RecO (253 aa).

Belongs to the RecO family.

In terms of biological role, involved in DNA repair and RecF pathway recombination. This is DNA repair protein RecO from Dehalococcoides mccartyi (strain CBDB1).